Consider the following 197-residue polypeptide: MKVLQEKILSEGKVLSGDVLKVDAFLNHQIDPVLMQEIGKEFAKRFQEEKITKIVTIESSGIAPAVMAALELGVKVIFARKRKSLTLQENMYVANVYSFTKQETNEISLSKKHIHEDDRVLIIDDFLANGQAALGLMSLVEQAGASVSGIGIVIEKAFQDGGKKLRERGVRVESLAEIASLEDGTVTFVQHETAEVR.

Residues Leu-20 and Asn-27 each contribute to the xanthine site. Residue 128–132 (ANGQA) coordinates 5-phospho-alpha-D-ribose 1-diphosphate. Position 156 (Lys-156) interacts with xanthine.

It belongs to the purine/pyrimidine phosphoribosyltransferase family. Xpt subfamily. In terms of assembly, homodimer.

Its subcellular location is the cytoplasm. It carries out the reaction XMP + diphosphate = xanthine + 5-phospho-alpha-D-ribose 1-diphosphate. It participates in purine metabolism; XMP biosynthesis via salvage pathway; XMP from xanthine: step 1/1. In terms of biological role, converts the preformed base xanthine, a product of nucleic acid breakdown, to xanthosine 5'-monophosphate (XMP), so it can be reused for RNA or DNA synthesis. The protein is Xanthine phosphoribosyltransferase of Bacillus cytotoxicus (strain DSM 22905 / CIP 110041 / 391-98 / NVH 391-98).